We begin with the raw amino-acid sequence, 215 residues long: 25 kDa ookinete surface antigen (215 aa).

Residues 1 to 16 (MNMSYLFFFFFIQLVL) form the signal peptide. In terms of domain architecture, EGF-like 1; truncated spans 29–58 (CKDGFLIQMSNHFECNCNPGFVLTSESTCE). EGF-like domains are found at residues 59–104 (NKVE…SICV), 104–148 (VPNE…NTCT), and 151–191 (GQTE…NACI). Intrachain disulfides connect Cys63/Cys78, Cys72/Cys90, Cys92/Cys103, Cys108/Cys118, Cys113/Cys131, Cys133/Cys147, Cys155/Cys166, Cys159/Cys175, and Cys177/Cys190. Residues Asn144 and Asn163 are each glycosylated (N-linked (GlcNAc...) asparagine). Ser192 carries GPI-anchor amidated serine lipidation. Residues 193-215 (FSLFNILNLSIIFIISLIYFYII) constitute a propeptide, removed in mature form. Asn200 carries an N-linked (GlcNAc...) asparagine glycan.

It localises to the cell membrane. The chain is 25 kDa ookinete surface antigen from Plasmodium gallinaceum.